We begin with the raw amino-acid sequence, 155 residues long: MKSLRLLAVGKLKTPFWQQAAAHYLERLRHTWRVTETLVRDGDAALPPAKRNADEGARLLAALGPADIVVCMDERGKAYTSREFAALLDRLTENATAVPCFVIGGAYGLDDAVLKRATLRVCLGPMTFPHEMARVVLLEQLYRADCILRRSPYHH.

Residues glycine 104 and 123–128 (LGPMTF) each bind S-adenosyl-L-methionine.

The protein belongs to the RNA methyltransferase RlmH family. In terms of assembly, homodimer.

It localises to the cytoplasm. It carries out the reaction pseudouridine(1915) in 23S rRNA + S-adenosyl-L-methionine = N(3)-methylpseudouridine(1915) in 23S rRNA + S-adenosyl-L-homocysteine + H(+). In terms of biological role, specifically methylates the pseudouridine at position 1915 (m3Psi1915) in 23S rRNA. The protein is Ribosomal RNA large subunit methyltransferase H of Nitratidesulfovibrio vulgaris (strain DSM 19637 / Miyazaki F) (Desulfovibrio vulgaris).